The following is a 132-amino-acid chain: uncharacterized protein (132 aa).

Residues methionine 1 to leucine 69 form the HTH merR-type domain. Residues glycine 4–isoleucine 23 constitute a DNA-binding region (H-T-H motif).

It is found in the cytoplasm. This is an uncharacterized protein from Pseudomonas aeruginosa (strain ATCC 15692 / DSM 22644 / CIP 104116 / JCM 14847 / LMG 12228 / 1C / PRS 101 / PAO1).